A 112-amino-acid chain; its full sequence is Putative transmembrane protein ORF112 (112 aa).

A run of 3 helical transmembrane segments spans residues 26-46, 50-70, and 80-100; these read FWEV…GILV, ILVT…MYLF, and IFFP…LVGV.

The protein localises to the host membrane. The chain is Putative transmembrane protein ORF112 from Acidianus convivator (ABV).